A 233-amino-acid polypeptide reads, in one-letter code: Membrane glycoprotein UL9 (233 aa).

The N-terminal stretch at 1-20 (MSKRLQVFPWITILFYTSKS) is a signal peptide. N40, N94, N101, N131, and N169 each carry an N-linked (GlcNAc...) asparagine; by host glycan. Residues 194–214 (MWIIPLVIVITIIVLICFKFP) traverse the membrane as a helical segment.

Belongs to the HHV-5 UL9 family.

Its subcellular location is the host membrane. The sequence is that of Membrane glycoprotein UL9 (UL9) from Homo sapiens (Human).